We begin with the raw amino-acid sequence, 174 residues long: Co-chaperone protein HscB homolog (174 aa).

The region spanning 2 to 74 is the J domain; that stretch reads NYFDLFNVVP…LRRAEHMLSL (73 aa).

The protein belongs to the HscB family. In terms of assembly, interacts with HscA and stimulates its ATPase activity.

Its function is as follows. Co-chaperone involved in the maturation of iron-sulfur cluster-containing proteins. Seems to help targeting proteins to be folded toward HscA. The chain is Co-chaperone protein HscB homolog from Shewanella frigidimarina (strain NCIMB 400).